Reading from the N-terminus, the 209-residue chain is C-type lectin domain family 6 member A (209 aa).

Topologically, residues methionine 1–serine 20 are cytoplasmic. Residues threonine 21–phenylalanine 43 form a helical; Signal-anchor for type II membrane protein membrane-spanning segment. The Extracellular segment spans residues threonine 44 to leucine 209. Intrachain disulfides connect cysteine 64–cysteine 78 and cysteine 79–cysteine 90. The region spanning phenylalanine 86–glutamate 203 is the C-type lectin domain. Residues valine 116, asparagine 118, and glutamate 122 each contribute to the Ca(2+) site. N-linked (GlcNAc...) asparagine glycosylation is present at asparagine 131. The Ca(2+) site is built by glutamate 168, asparagine 170, and glutamate 174. Alpha-D-mannopyranose is bound by residues glutamate 168–asparagine 170, glutamate 174, tryptophan 182, and asparagine 190–aspartate 191. Cysteine 176 and cysteine 194 are oxidised to a cystine. Asparagine 190, aspartate 191, and glutamate 203 together coordinate Ca(2+).

Associated with FCER1G. Heterodimer with CLEC4D; this heterodimer forms a pattern recognition receptor (PRR) against fungal infection.

It is found in the cell membrane. In terms of biological role, calcium-dependent lectin that acts as a pattern recognition receptor (PRR) of the innate immune system: specifically recognizes and binds alpha-mannans on C.albicans hypheas. Binding of C.albicans alpha-mannans to this receptor complex leads to phosphorylation of the immunoreceptor tyrosine-based activation motif (ITAM) of FCER1G, triggering activation of SYK, CARD9 and NF-kappa-B, consequently driving maturation of antigen-presenting cells and shaping antigen-specific priming of T-cells toward effector T-helper 1 and T-helper 17 cell subtypes. Also recognizes, in a mannose-dependent manner, allergens from house dust mite and fungi, by promoting cysteinyl leukotriene production. Recognizes soluble elements from the eggs of Shistosoma mansoni altering adaptive immune responses. This is C-type lectin domain family 6 member A (CLEC6A) from Rattus norvegicus (Rat).